Reading from the N-terminus, the 96-residue chain is Putative septation protein SpoVG (96 aa).

Belongs to the SpoVG family.

Functionally, could be involved in septation. In Geobacillus sp. (strain WCH70), this protein is Putative septation protein SpoVG.